The primary structure comprises 122 residues: Large ribosomal subunit protein uL14c (122 aa).

It belongs to the universal ribosomal protein uL14 family. In terms of assembly, part of the 50S ribosomal subunit.

It localises to the plastid. The protein localises to the chloroplast. Functionally, binds to 23S rRNA. This Pinus koraiensis (Korean pine) protein is Large ribosomal subunit protein uL14c.